The following is a 308-amino-acid chain: ADP-L-glycero-D-manno-heptose-6-epimerase (308 aa).

NADP(+) is bound by residues 10–11 (MI), 31–32 (DN), Lys38, Lys53, 75–79 (EGACS), and Asn92. The active-site Proton acceptor is the Tyr139. Lys143 serves as a coordination point for NADP(+). Asn168 serves as a coordination point for substrate. Residues Val169 and Lys177 each coordinate NADP(+). Catalysis depends on Lys177, which acts as the Proton acceptor. Substrate-binding positions include Ser179, His186, 200–203 (FAGS), Arg208, and Tyr271.

The protein belongs to the NAD(P)-dependent epimerase/dehydratase family. HldD subfamily. Homopentamer. Requires NADP(+) as cofactor.

The enzyme catalyses ADP-D-glycero-beta-D-manno-heptose = ADP-L-glycero-beta-D-manno-heptose. It participates in nucleotide-sugar biosynthesis; ADP-L-glycero-beta-D-manno-heptose biosynthesis; ADP-L-glycero-beta-D-manno-heptose from D-glycero-beta-D-manno-heptose 7-phosphate: step 4/4. Catalyzes the interconversion between ADP-D-glycero-beta-D-manno-heptose and ADP-L-glycero-beta-D-manno-heptose via an epimerization at carbon 6 of the heptose. The protein is ADP-L-glycero-D-manno-heptose-6-epimerase of Mannheimia succiniciproducens (strain KCTC 0769BP / MBEL55E).